The chain runs to 248 residues: Triosephosphate isomerase (248 aa).

A substrate-binding site is contributed by 9–11 (NWK). His94 (electrophile) is an active-site residue. Glu166 acts as the Proton acceptor in catalysis. Substrate contacts are provided by residues Gly172, Ser212, and 233–234 (GG).

Belongs to the triosephosphate isomerase family. Homodimer.

The protein localises to the cytoplasm. The enzyme catalyses D-glyceraldehyde 3-phosphate = dihydroxyacetone phosphate. The protein operates within carbohydrate biosynthesis; gluconeogenesis. It functions in the pathway carbohydrate degradation; glycolysis; D-glyceraldehyde 3-phosphate from glycerone phosphate: step 1/1. Involved in the gluconeogenesis. Catalyzes stereospecifically the conversion of dihydroxyacetone phosphate (DHAP) to D-glyceraldehyde-3-phosphate (G3P). The protein is Triosephosphate isomerase of Clostridium botulinum (strain Eklund 17B / Type B).